Consider the following 211-residue polypeptide: uncharacterized protein (211 aa).

Helical transmembrane passes span 77 to 97 (FLMF…AITI), 113 to 133 (GISV…VLIG), 152 to 172 (ILIS…NVIP), and 179 to 199 (LLTP…PLFG).

The protein localises to the cell membrane. This is an uncharacterized protein from Bacillus subtilis (strain 168).